The following is a 1070-amino-acid chain: DNA double-strand break repair Rad50 ATPase (1070 aa).

ATP is bound by residues Arg12, 32 to 38 (NGSGKSS), and Gln142. Coiled coils occupy residues 227 to 257 (LEEL…RLQE), 369 to 403 (ECRT…EKAG), and 449 to 478 (LREL…KEIR). One can recognise a Zinc-hook domain in the interval 508–607 (LENLEDFNEL…KLNRLKEAKK (100 aa)). The Zn(2+) site is built by Cys555 and Cys558. Coiled-coil stretches lie at residues 570–614 (TAEE…QAYD) and 878–908 (LKRL…ADEL). Position 969 to 974 (969 to 974 (LLSGGE)) interacts with ATP.

Belongs to the SMC family. RAD50 subfamily. Homodimer. Forms a heterotetramer composed of two Mre11 subunits and two Rad50 subunits. It depends on Zn(2+) as a cofactor.

Functionally, part of the Rad50/Mre11 complex, which is involved in the early steps of DNA double-strand break (DSB) repair. The complex may facilitate opening of the processed DNA ends to aid in the recruitment of HerA and NurA. Rad50 controls the balance between DNA end bridging and DNA resection via ATP-dependent structural rearrangements of the Rad50/Mre11 complex. The sequence is that of DNA double-strand break repair Rad50 ATPase from Methanosarcina mazei (strain ATCC BAA-159 / DSM 3647 / Goe1 / Go1 / JCM 11833 / OCM 88) (Methanosarcina frisia).